We begin with the raw amino-acid sequence, 94 residues long: Large ribosomal subunit protein bL25 (94 aa).

This sequence belongs to the bacterial ribosomal protein bL25 family. As to quaternary structure, part of the 50S ribosomal subunit; part of the 5S rRNA/L5/L18/L25 subcomplex. Contacts the 5S rRNA. Binds to the 5S rRNA independently of L5 and L18.

In terms of biological role, this is one of the proteins that binds to the 5S RNA in the ribosome where it forms part of the central protuberance. The sequence is that of Large ribosomal subunit protein bL25 from Escherichia coli (strain K12 / DH10B).